The primary structure comprises 48 residues: Large ribosomal subunit protein bL33B (48 aa).

This sequence belongs to the bacterial ribosomal protein bL33 family.

The protein is Large ribosomal subunit protein bL33B (rpmG 2) of Mycoplasmoides gallisepticum (strain R(low / passage 15 / clone 2)) (Mycoplasma gallisepticum).